The primary structure comprises 379 residues: Protein RecA (379 aa).

Residue 79–86 (GPESSGKT) participates in ATP binding.

This sequence belongs to the RecA family.

The protein localises to the cytoplasm. Its function is as follows. Can catalyze the hydrolysis of ATP in the presence of single-stranded DNA, the ATP-dependent uptake of single-stranded DNA by duplex DNA, and the ATP-dependent hybridization of homologous single-stranded DNAs. It interacts with LexA causing its activation and leading to its autocatalytic cleavage. The protein is Protein RecA of Streptococcus agalactiae.